We begin with the raw amino-acid sequence, 181 residues long: Large ribosomal subunit protein uL5 (181 aa).

Belongs to the universal ribosomal protein uL5 family. Part of the 50S ribosomal subunit; part of the 5S rRNA/L5/L18/L25 subcomplex. Contacts the 5S rRNA and the P site tRNA. Forms a bridge to the 30S subunit in the 70S ribosome.

Its function is as follows. This is one of the proteins that bind and probably mediate the attachment of the 5S RNA into the large ribosomal subunit, where it forms part of the central protuberance. In the 70S ribosome it contacts protein S13 of the 30S subunit (bridge B1b), connecting the 2 subunits; this bridge is implicated in subunit movement. Contacts the P site tRNA; the 5S rRNA and some of its associated proteins might help stabilize positioning of ribosome-bound tRNAs. The chain is Large ribosomal subunit protein uL5 from Helicobacter acinonychis (strain Sheeba).